Reading from the N-terminus, the 428-residue chain is L-rhamnonate dehydratase (428 aa).

Substrate is bound by residues His56 and Arg82. Mg(2+) contacts are provided by Asp249, Glu275, and Glu303. His352 serves as the catalytic Proton acceptor. Glu372 lines the substrate pocket.

Belongs to the mandelate racemase/muconate lactonizing enzyme family. RhamD subfamily. Homooctamer; tetramer of dimers. The cofactor is Mg(2+).

The catalysed reaction is L-rhamnonate = 2-dehydro-3-deoxy-L-rhamnonate + H2O. Functionally, catalyzes the dehydration of L-rhamnonate to 2-keto-3-deoxy-L-rhamnonate (KDR). This chain is L-rhamnonate dehydratase, found in Shigella sonnei (strain Ss046).